A 392-amino-acid chain; its full sequence is uncharacterized protein (392 aa).

Residues 7 to 76 enclose the J domain; sequence TEYYDLLGIS…RSQYDQFGKE (70 aa). Ser108 carries the post-translational modification Phosphoserine.

This is an uncharacterized protein from Schizosaccharomyces pombe (strain 972 / ATCC 24843) (Fission yeast).